We begin with the raw amino-acid sequence, 123 residues long: MPTINQLIRKKRQSSASRKKSPALQKCPQRRGVCLQVKTKTPKKPNSALRKVAWVRLSNGQEVIAYIGGEGHNLQEHSIVLVQGGRVKDLPGVRYHIVRGALDCAAVKNRKQSRSRYGAKRPK.

A disordered region spans residues 1 to 29 (MPTINQLIRKKRQSSASRKKSPALQKCPQ). The segment covering 8-21 (IRKKRQSSASRKKS) has biased composition (basic residues). Residue Asp89 is modified to 3-methylthioaspartic acid.

Belongs to the universal ribosomal protein uS12 family. Part of the 30S ribosomal subunit. Contacts proteins S8 and S17. May interact with IF1 in the 30S initiation complex.

In terms of biological role, with S4 and S5 plays an important role in translational accuracy. Its function is as follows. Interacts with and stabilizes bases of the 16S rRNA that are involved in tRNA selection in the A site and with the mRNA backbone. Located at the interface of the 30S and 50S subunits, it traverses the body of the 30S subunit contacting proteins on the other side and probably holding the rRNA structure together. The combined cluster of proteins S8, S12 and S17 appears to hold together the shoulder and platform of the 30S subunit. This is Small ribosomal subunit protein uS12 from Chlamydia abortus (strain DSM 27085 / S26/3) (Chlamydophila abortus).